Here is a 155-residue protein sequence, read N- to C-terminus: Ribonuclease H (155 aa).

The RNase H type-1 domain occupies 5–146 (LAEVVEIFTD…ADMLANRGVQ (142 aa)). Mg(2+) is bound by residues D14, E52, D74, and D138.

It belongs to the RNase H family. Monomer. It depends on Mg(2+) as a cofactor.

Its subcellular location is the cytoplasm. It catalyses the reaction Endonucleolytic cleavage to 5'-phosphomonoester.. Functionally, endonuclease that specifically degrades the RNA of RNA-DNA hybrids. This Nitrosospira multiformis (strain ATCC 25196 / NCIMB 11849 / C 71) protein is Ribonuclease H.